Here is a 441-residue protein sequence, read N- to C-terminus: MGLNDSLLDMQLLTIGINHHTAPVALRERVAFPLEQIKPALSTFKSVFLGHPAPNAPEAAILSTCNRTELYCATNDRAARDAAIRWMSDYHRIPADELAPHVYALPQSEAVRHAFRVASGLDSMVLGETQILGQMKNAVRTASEAGSLGTYLNQLFQRTFAVAKEVRGTTEIGAQSVSMAAAAVRLAQRIFEQVAQQRVLFIGAGEMIELCATHFAAQGPRELVVANRTAERGAKLAERFGGRAMPLADLPARMHEFDIIVSCTASTLPIIGLGAVERAVKARRHRPIFMVDLAVPRDIEPEVGKLKDVFLYTVDDLGAIVREGNASRQAAVAQAEAIIETRVQNFMQWLDARSIVPVIRHMHTQADALRRAEVERARKMLARGDDPDAVLDALSQALTNKLIHGPTSALNRANGADRDSLIDLMRGFYQHAPRSSDTSDR.

Substrate-binding positions include 64 to 67, Ser-123, 128 to 130, and Gln-134; these read TCNR and ETQ. The active-site Nucleophile is Cys-65. 203-208 provides a ligand contact to NADP(+); that stretch reads GAGEMI.

This sequence belongs to the glutamyl-tRNA reductase family. Homodimer.

The catalysed reaction is (S)-4-amino-5-oxopentanoate + tRNA(Glu) + NADP(+) = L-glutamyl-tRNA(Glu) + NADPH + H(+). It functions in the pathway porphyrin-containing compound metabolism; protoporphyrin-IX biosynthesis; 5-aminolevulinate from L-glutamyl-tRNA(Glu): step 1/2. In terms of biological role, catalyzes the NADPH-dependent reduction of glutamyl-tRNA(Glu) to glutamate 1-semialdehyde (GSA). This Burkholderia pseudomallei (strain K96243) protein is Glutamyl-tRNA reductase.